Reading from the N-terminus, the 376-residue chain is UDP-N-acetylglucosamine--N-acetylmuramyl-(pentapeptide) pyrophosphoryl-undecaprenol N-acetylglucosamine transferase (376 aa).

UDP-N-acetyl-alpha-D-glucosamine is bound by residues Thr14–Gly16, Asn128, Arg169, Ser201, Ile256, and Gln301.

It belongs to the glycosyltransferase 28 family. MurG subfamily.

The protein localises to the cell inner membrane. It catalyses the reaction di-trans,octa-cis-undecaprenyl diphospho-N-acetyl-alpha-D-muramoyl-L-alanyl-D-glutamyl-meso-2,6-diaminopimeloyl-D-alanyl-D-alanine + UDP-N-acetyl-alpha-D-glucosamine = di-trans,octa-cis-undecaprenyl diphospho-[N-acetyl-alpha-D-glucosaminyl-(1-&gt;4)]-N-acetyl-alpha-D-muramoyl-L-alanyl-D-glutamyl-meso-2,6-diaminopimeloyl-D-alanyl-D-alanine + UDP + H(+). The protein operates within cell wall biogenesis; peptidoglycan biosynthesis. Its function is as follows. Cell wall formation. Catalyzes the transfer of a GlcNAc subunit on undecaprenyl-pyrophosphoryl-MurNAc-pentapeptide (lipid intermediate I) to form undecaprenyl-pyrophosphoryl-MurNAc-(pentapeptide)GlcNAc (lipid intermediate II). The chain is UDP-N-acetylglucosamine--N-acetylmuramyl-(pentapeptide) pyrophosphoryl-undecaprenol N-acetylglucosamine transferase from Phocaeicola vulgatus (strain ATCC 8482 / DSM 1447 / JCM 5826 / CCUG 4940 / NBRC 14291 / NCTC 11154) (Bacteroides vulgatus).